The following is a 441-amino-acid chain: MRLSRYFLPILRETPKEAEIVSHRLMLRAGMIRQEAAGIYAWLPLGLRVLNKVCDVIRAEQDRAGAVEILMPTIQAADLWRESGRYEAYGKEMLRLKDRHERELLYGPTAEEVVTEIFRASARSYKDLPKNLYQISWKFRDEVRPRFGTMRSREFLMKDGYSFDLDQAAARHSYNKVFVSYLRTFETLGLRAIPMRADTGPIGGDLSHEFIILAKTGESEVFCDRAYLDMPVPPPSVDFDDVAGLQGVVDSWTSHYAATDEMHDEAVFAEVPEASRLSARGIEVGHIFYFGTKYSTPMKAVVTGPDGQERPVHMGSYGIGPSRLVAATIEASHDEAGIIWPDAIAPFDVALINLKVGDAACDAACAEIQSALETAGLSVLYDDRDERPGAKFATADLIGLPWQVIVGPKGLAEGKIELKRRASGERETLDPVDLPARIRRV.

This sequence belongs to the class-II aminoacyl-tRNA synthetase family. ProS type 2 subfamily. As to quaternary structure, homodimer.

It is found in the cytoplasm. The catalysed reaction is tRNA(Pro) + L-proline + ATP = L-prolyl-tRNA(Pro) + AMP + diphosphate. Functionally, catalyzes the attachment of proline to tRNA(Pro) in a two-step reaction: proline is first activated by ATP to form Pro-AMP and then transferred to the acceptor end of tRNA(Pro). The chain is Proline--tRNA ligase from Methylorubrum populi (strain ATCC BAA-705 / NCIMB 13946 / BJ001) (Methylobacterium populi).